Consider the following 463-residue polypeptide: MSIKNLYKNLNDEMGSISKRRKNNNISFNKSTFDSHAMDALNTSFENYEDISLEGFESYINESASRTVIERNSLVPLKDYDAVHSLRNAFGKPPRDNEPRIGTHPEFKHLELDNRTDTGYVVTMFMDIIGSTKLGLSYSPSDVFLFKNNIITGAIETINAFDGHVHRIMGDAVMAFFRSRQNEQHDTLENSVIDAINCAAYFIEVMNEIVKPQIKEVADENIGIRIGIDLGETNYVLWGNYGIPGVNEVTATSFFVDIASKLQHKAPKNSIMLGQNLVEKLGLTVNDYLTYKLKDGQPDRYIIDFTSKNQSRLRYKQYLLNQSKYFSILPHGLKPSRIKVVISYSNDELGLVNRKDYFNCSSVIPKGKWVKFHATFCEEYGEHYESLKFKFRVVNNGLDASKKDNYDNHETEIIKKAYEKENGVFTAIHKEQTSYKGLQHMYISVISNDTVIEREIPCSIFIK.

Residues V122–G231 enclose the Guanylate cyclase domain. F125 serves as a coordination point for a ribonucleoside 5'-triphosphate. Positions 127, 128, and 171 each coordinate Mn(2+). Residues K334–R454 are AGS-C domain.

The protein belongs to the adenylyl cyclase class-4/guanylyl cyclase family. Pyrimidine cyclase subfamily. Homodimer. Mn(2+) is required as a cofactor.

It localises to the cytoplasm. It carries out the reaction CTP = 3',5'-cyclic CMP + diphosphate. In terms of biological role, pycsar (pyrimidine cyclase system for antiphage resistance) provides immunity against bacteriophage. The pyrimidine cyclase (PycC) synthesizes cyclic nucleotides in response to infection; these serve as specific second messenger signals. The signal activates the adjacent effector, leading to bacterial cell death and abortive phage infection. A clade E Pycsar system. The pyrimidine cyclase gene of a two-gene Pycsar system, generates cyclic CMP (cCMP) from CTP in response to bacteriophage infection. Has little to no activity on ATP, GTP or UTP. Expression of this and adjacent effector Ec303145PycTM (AC P0DV27) confers resistance to bacteriophage P1, T5, lambda-vir and phi27. The protein is Cytidylate cyclase of Escherichia coli.